Reading from the N-terminus, the 732-residue chain is Adducin-related protein 1 (732 aa).

2 disordered regions span residues 1-22 (MIGR…DPEY) and 684-732 (TRFS…KKDK). Residues 685 to 705 (RFSSTQGTSEGNTTSRSCTTA) are compositionally biased toward polar residues. Basic residues predominate over residues 716–732 (KKKKKKGFLSFMRKKDK).

The protein belongs to the aldolase class II family. Adducin subfamily.

It is found in the cytoplasm. The protein resides in the cytoskeleton. It localises to the cell membrane. Its function is as follows. Membrane-cytoskeleton-associated protein that promotes the assembly of the spectrin-actin network. Plays a role in time-dependent memmory loss and the retention of conditioned behavior over time. This chain is Adducin-related protein 1, found in Caenorhabditis elegans.